A 288-amino-acid chain; its full sequence is Putative hydrolase LipZ (288 aa).

The protein belongs to the AB hydrolase superfamily.

The polypeptide is Putative hydrolase LipZ (Mycobacterium tuberculosis (strain CDC 1551 / Oshkosh)).